The following is a 396-amino-acid chain: Gap junction gamma-1 protein (396 aa).

Over 1–22 (MSWSFLTRLLEEIHNHSTFVGK) the chain is Cytoplasmic. A helical membrane pass occupies residues 23–45 (IWLTVLIAFRIALTAVGGESIYY). The Extracellular portion of the chain corresponds to 46-75 (DEQSKFVCNTEQPGCENVCYDAFAPLSHVR). Residues 76 to 95 (FWVFQIILVATPSVMYLGYA) traverse the membrane as a helical segment. Residues 96–175 (IHKIAKMEHG…RRIREDGLMK (80 aa)) are Cytoplasmic-facing. Positions 145–165 (ELESEKENKEQNQPKPKHDGR) are disordered. Basic and acidic residues predominate over residues 147-156 (ESEKENKEQN). A helical transmembrane segment spans residues 176–198 (IYVLQLLARTVFEVGFLIGQYFL). Residues 199 to 228 (YGFQVHPFYVCSRLPCPHKIDCFISRPTEK) lie on the Extracellular side of the membrane. The chain crosses the membrane as a helical span at residues 229–248 (TIFLLIMYGVTGLCLLLNIW). The Cytoplasmic portion of the chain corresponds to 249–396 (EMLHLGFGTI…SGDGKNSVWI (148 aa)). The tract at residues 355-396 (AYSHQNNPHGPREKKAKVGSKAGSNKSSASSKSGDGKNSVWI) is disordered. Residues 373–396 (GSKAGSNKSSASSKSGDGKNSVWI) are compositionally biased toward low complexity.

This sequence belongs to the connexin family. Gamma-type subfamily. As to quaternary structure, a connexon is composed of a hexamer of connexins. Interacts with CNST.

It localises to the cell membrane. It is found in the cell junction. The protein localises to the gap junction. One gap junction consists of a cluster of closely packed pairs of transmembrane channels, the connexons, through which materials of low MW diffuse from one cell to a neighboring cell. The protein is Gap junction gamma-1 protein (GJC1) of Canis lupus familiaris (Dog).